Here is a 254-residue protein sequence, read N- to C-terminus: Alcohol dehydrogenase (254 aa).

F10–L33 serves as a coordination point for NAD(+). S138 lines the substrate pocket. The active-site Proton acceptor is the Y151.

This sequence belongs to the short-chain dehydrogenases/reductases (SDR) family. Homodimer.

The enzyme catalyses a primary alcohol + NAD(+) = an aldehyde + NADH + H(+). The catalysed reaction is a secondary alcohol + NAD(+) = a ketone + NADH + H(+). This chain is Alcohol dehydrogenase (Adh), found in Drosophila affinidisjuncta (Fruit fly).